Consider the following 92-residue polypeptide: Small ribosomal subunit protein uS19 (92 aa).

Belongs to the universal ribosomal protein uS19 family.

Its function is as follows. Protein S19 forms a complex with S13 that binds strongly to the 16S ribosomal RNA. The chain is Small ribosomal subunit protein uS19 from Parvibaculum lavamentivorans (strain DS-1 / DSM 13023 / NCIMB 13966).